Consider the following 1117-residue polypeptide: DNA polymerase (1117 aa).

Positions 591-621 are disordered; that stretch reads ESSPVASFEEDSEQTSDSSLGEVSSQGSSDG. The segment covering 606–618 has biased composition (low complexity); sequence SDSSLGEVSSQGS.

Belongs to the DNA polymerase type-B family.

The protein resides in the host nucleus. The enzyme catalyses DNA(n) + a 2'-deoxyribonucleoside 5'-triphosphate = DNA(n+1) + diphosphate. The protein is DNA polymerase of Cavia porcellus (Guinea pig).